Consider the following 291-residue polypeptide: Bifunctional protein FolD (291 aa).

Residues 168–170, T195, and V236 each bind NADP(+); that span reads GRG.

This sequence belongs to the tetrahydrofolate dehydrogenase/cyclohydrolase family. As to quaternary structure, homodimer.

The catalysed reaction is (6R)-5,10-methylene-5,6,7,8-tetrahydrofolate + NADP(+) = (6R)-5,10-methenyltetrahydrofolate + NADPH. The enzyme catalyses (6R)-5,10-methenyltetrahydrofolate + H2O = (6R)-10-formyltetrahydrofolate + H(+). The protein operates within one-carbon metabolism; tetrahydrofolate interconversion. Functionally, catalyzes the oxidation of 5,10-methylenetetrahydrofolate to 5,10-methenyltetrahydrofolate and then the hydrolysis of 5,10-methenyltetrahydrofolate to 10-formyltetrahydrofolate. The sequence is that of Bifunctional protein FolD from Bifidobacterium longum (strain DJO10A).